Here is a 250-residue protein sequence, read N- to C-terminus: Kallikrein-9 (250 aa).

An N-terminal signal peptide occupies residues 1–15 (MKLGLLCALLSLLAG). One can recognise a Peptidase S1 domain in the interval 23–249 (AIGAEECRPN…YLDWIQEIME (227 aa)). Intrachain disulfides connect C29–C164, C48–C64, C136–C238, C143–C210, C175–C189, and C200–C225. Residues H63 and D111 each act as charge relay system in the active site. N131 and N166 each carry an N-linked (GlcNAc...) asparagine glycan. Residue S204 is the Charge relay system of the active site. N211 is a glycosylation site (N-linked (GlcNAc...) asparagine).

Belongs to the peptidase S1 family. Kallikrein subfamily. As to expression, skin, thymus, trachea, cerebellum and spinal cord.

The protein localises to the secreted. In Homo sapiens (Human), this protein is Kallikrein-9 (KLK9).